Here is a 403-residue protein sequence, read N- to C-terminus: RNA-binding motif, single-stranded-interacting protein 1 (403 aa).

The segment at 30–56 (PAHPMAPPSPSTTSSNNNSSSSSNSGW) is disordered. Positions 40-54 (STTSSNNNSSSSSNS) are enriched in low complexity. 2 consecutive RRM domains span residues 62–135 (TNLY…MAKQ) and 141–226 (TNLY…FADG). The residue at position 208 (threonine 208) is a Phosphothreonine.

The protein localises to the nucleus. Single-stranded DNA binding protein that interacts with the region upstream of the C-myc gene. Binds specifically to the DNA sequence motif 5'-[AT]CT[AT][AT]T-3'. Probably has a role in DNA replication. In Bos taurus (Bovine), this protein is RNA-binding motif, single-stranded-interacting protein 1 (RBMS1).